A 582-amino-acid polypeptide reads, in one-letter code: 2-succinyl-5-enolpyruvyl-6-hydroxy-3-cyclohexene-1-carboxylate synthase (582 aa).

This sequence belongs to the TPP enzyme family. MenD subfamily. As to quaternary structure, homodimer. Mg(2+) serves as cofactor. It depends on Mn(2+) as a cofactor. Thiamine diphosphate is required as a cofactor.

It catalyses the reaction isochorismate + 2-oxoglutarate + H(+) = 5-enolpyruvoyl-6-hydroxy-2-succinyl-cyclohex-3-ene-1-carboxylate + CO2. It functions in the pathway quinol/quinone metabolism; 1,4-dihydroxy-2-naphthoate biosynthesis; 1,4-dihydroxy-2-naphthoate from chorismate: step 2/7. It participates in cofactor biosynthesis; phylloquinone biosynthesis. Its function is as follows. Catalyzes the thiamine diphosphate-dependent decarboxylation of 2-oxoglutarate and the subsequent addition of the resulting succinic semialdehyde-thiamine pyrophosphate anion to isochorismate to yield 2-succinyl-5-enolpyruvyl-6-hydroxy-3-cyclohexene-1-carboxylate (SEPHCHC). The sequence is that of 2-succinyl-5-enolpyruvyl-6-hydroxy-3-cyclohexene-1-carboxylate synthase from Trichodesmium erythraeum (strain IMS101).